Here is an 89-residue protein sequence, read N- to C-terminus: LSM complex subunit LSM3 (89 aa).

Residues 3-82 form the Sm domain; it reads TPLDLLKLNL…VTLISTPSED (80 aa).

This sequence belongs to the snRNP Sm proteins family. Component of the heptameric LSM1-LSM7 complex that forms a seven-membered ring structure with a donut shape. The LSm subunits are arranged in the order LSM1, LSM2, LSM3, LSM6, LSM5, LSM7 and LSM4. Except for LSM1, where a C-terminal helix crosses the ring structure to form additional interactions with LSM3 and LSM6, each subunit interacts only with its two neighboring subunits. The LSM1-LSM7 complex interacts with PAT1; within the complex PAT1 has direct interactions with LSM2 and LSM3. The LSM1-LSM7 complex interacts with XRN1. Component of the heptameric LSM2-LSM8 complex that forms a seven-membered ring structure with a donut shape; an RNA strand can pass through the hole in the center of the ring structure. The LSm subunits are arranged in the order LSM8, LSM2, LSM3, LSM6, LSM5, LSM7 and LSM4. Component of the spliceosome U4/U6-U5 tri-snRNP complex composed of the U4, U6 and U5 snRNAs and at least PRP3, PRP4, PRP6, PRP8, PRP18, PRP31, PRP38, SNU13, SNU23, SNU66, SNU114, SPP381, SMB1, SMD1, SMD2, SMD3, SMX2, SMX3, LSM2, LSM3, LSM4, LSM5, LSM6, LSM7, LSM8, BRR2 and DIB1. May be found in a complex comprising LSM2-LSM7 without LSM1 or LSM8; the complex associates with pre-P RNA and snoRNA SNR5.

Its subcellular location is the nucleus. It localises to the nucleolus. It is found in the cytoplasm. Its function is as follows. Component of LSm protein complexes, which are involved in RNA processing and may function in a chaperone-like manner. Component of the cytoplasmic LSM1-LSM7 complex which is involved in mRNA degradation by activating the decapping step. Together with PAT1, the LSM1-LSM7 complex binds to osmotic stress-activated mRNAs to attenuate the osmotic stress response, probably by limiting ribosome access to the mRNA and consequently translation. Component of the nuclear LSM2-LSM8 complex, which is involved in spliceosome assembly. The LSM2-LSM8 complex plays a role in the biogenesis of the spliceosomal U4/U6-U5 tri-snRNP complex by accelerating PRP24-mediated annealing of U4/U6 di-snRNA. The LSM2-LSM8 complex binds U6 snRNA terminating with a non-cyclic 3' phosphate group. LSM2-LSM8 is probably also involved in degradation of nuclear pre-mRNA by targeting them for decapping. LSM2-LSM8 could be involved in processing of pre-tRNAs, pre-rRNAs and U3 snoRNA, although involvement may be indirect. In a complex that probably contains LSM2-LSM7, but not LSM1 or LSM8, associates with the precursor of the RNA component of RNase P (pre-P RNA) and may be involved in maturing pre-P RNA; the complex also associates with snoRNA SNR5. The sequence is that of LSM complex subunit LSM3 (LSM3) from Saccharomyces cerevisiae (strain ATCC 204508 / S288c) (Baker's yeast).